The primary structure comprises 208 residues: CKLF-like MARVEL transmembrane domain-containing protein 4 (208 aa).

Residues Met-1–Glu-11 show a composition bias toward acidic residues. The tract at residues Met-1–Arg-38 is disordered. The span at Ser-15–Ser-25 shows a compositional bias: low complexity. The 128-residue stretch at Tyr-49–Arg-176 folds into the MARVEL domain. The next 4 helical transmembrane spans lie at Val-59 to Ser-79, Tyr-85 to Phe-105, Leu-123 to Leu-143, and Ile-151 to Ala-171. Ser-194 bears the Phosphoserine mark.

The protein belongs to the chemokine-like factor family. As to quaternary structure, interacts with PD1L1 and CMTM6.

It localises to the membrane. Acts as a backup for CMTM6 to regulate plasma membrane expression of PD-L1/CD274, an immune inhibitory ligand critical for immune tolerance to self and antitumor immunity. May protect PD-L1/CD274 from being polyubiquitinated and targeted for degradation. The protein is CKLF-like MARVEL transmembrane domain-containing protein 4 of Mus musculus (Mouse).